A 294-amino-acid polypeptide reads, in one-letter code: Phosphoribosylaminoimidazole-succinocarboxamide synthase (294 aa).

This sequence belongs to the SAICAR synthetase family.

It carries out the reaction 5-amino-1-(5-phospho-D-ribosyl)imidazole-4-carboxylate + L-aspartate + ATP = (2S)-2-[5-amino-1-(5-phospho-beta-D-ribosyl)imidazole-4-carboxamido]succinate + ADP + phosphate + 2 H(+). It functions in the pathway purine metabolism; IMP biosynthesis via de novo pathway; 5-amino-1-(5-phospho-D-ribosyl)imidazole-4-carboxamide from 5-amino-1-(5-phospho-D-ribosyl)imidazole-4-carboxylate: step 1/2. This is Phosphoribosylaminoimidazole-succinocarboxamide synthase from Thermoplasma volcanium (strain ATCC 51530 / DSM 4299 / JCM 9571 / NBRC 15438 / GSS1).